We begin with the raw amino-acid sequence, 130 residues long: UPF0102 protein TDE_2303 (130 aa).

Belongs to the UPF0102 family.

This chain is UPF0102 protein TDE_2303, found in Treponema denticola (strain ATCC 35405 / DSM 14222 / CIP 103919 / JCM 8153 / KCTC 15104).